Consider the following 1313-residue polypeptide: Mitogen-activated protein kinase kinase kinase 15 (1313 aa).

Residues 1–58 (MESGGGNAPAGALGAASESPQCPPPPGVEGAAGPAEPDGAAEGAAGGSGEGESGGGPR) form a disordered region. A compositionally biased stretch (low complexity) spans 28 to 43 (VEGAAGPAEPDGAAEG). Over residues 44–57 (AAGGSGEGESGGGP) the composition is skewed to gly residues. Residues 652–908 (NGERVVLGKG…TAELLREGFL (257 aa)) form the Protein kinase domain. ATP-binding positions include 658–666 (LGKGTYGIV) and Lys-681. The Proton acceptor role is filled by Asp-773. A disordered region spans residues 939 to 958 (EPMATSSSEHGSVSPDSDAQ). The span at 942-955 (ATSSSEHGSVSPDS) shows a compositional bias: polar residues. Phosphoserine is present on Ser-994. A coiled-coil region spans residues 1179–1225 (QLGELRQETNRLLEHLVEKEREYQNLLRQTLEQKTQELYHLQLKLKS).

The protein belongs to the protein kinase superfamily. STE Ser/Thr protein kinase family. MAP kinase kinase kinase subfamily. Requires Mg(2+) as cofactor. Isoform 2 and isoform 3 are widely expressed. Isoform 2 highest levels are observed in fetal brain, and isoform 3 highest levels in pancreas, peripheral blood leukocytes, fetal brain and spleen.

The catalysed reaction is L-seryl-[protein] + ATP = O-phospho-L-seryl-[protein] + ADP + H(+). The enzyme catalyses L-threonyl-[protein] + ATP = O-phospho-L-threonyl-[protein] + ADP + H(+). Contains an N-terminal autoinhibitory domain. Activated by phosphorylation at Thr-812, inhibited by phosphorylation at Ser-924 and Ser-994. Serine/threonine kinase which acts as a component of the MAP kinase signal transduction pathway. Once activated, acts as an upstream activator of the p38 MAPK signal transduction cascade through the phosphorylation and activation of several MAP kinase kinases. May function in a signal transduction pathway that is activated by various cell stresses and leads to apoptosis. Involved in phosphorylation of WNK4 in response to osmotic stress or hypotonic low-chloride stimulation via the p38 MAPK signal transduction cascade. The protein is Mitogen-activated protein kinase kinase kinase 15 (MAP3K15) of Homo sapiens (Human).